The following is a 283-amino-acid chain: MIARILDGRTCAEKVKARVKENIRLLQEKGLPSPGLAVILVGNDPASATYVAHKERACQAVGIRSTVYRMPNTITESELASKIDECNRDSNTHGILLQLPLPAHIDSANLLERIRPDKDVDGFHPYNLGRLVQRRPALRPCTPYGVMTLLTETHENLEGKHAVIVGASNIVGRPMALELLLAKCTVTVCHRFTRDLAEHVKSAELLIVAIGKPGIIQSEWIKPGAIVIDVGFSRLSPNKIAGDIDFETAKERASWITPVPGGVGPMTVATLLENTLQAAQTFL.

166-168 is a binding site for NADP(+); it reads GAS.

The protein belongs to the tetrahydrofolate dehydrogenase/cyclohydrolase family. In terms of assembly, homodimer.

The enzyme catalyses (6R)-5,10-methylene-5,6,7,8-tetrahydrofolate + NADP(+) = (6R)-5,10-methenyltetrahydrofolate + NADPH. It carries out the reaction (6R)-5,10-methenyltetrahydrofolate + H2O = (6R)-10-formyltetrahydrofolate + H(+). It functions in the pathway one-carbon metabolism; tetrahydrofolate interconversion. Its function is as follows. Catalyzes the oxidation of 5,10-methylenetetrahydrofolate to 5,10-methenyltetrahydrofolate and then the hydrolysis of 5,10-methenyltetrahydrofolate to 10-formyltetrahydrofolate. This chain is Bifunctional protein FolD, found in Coxiella burnetii (strain CbuG_Q212) (Coxiella burnetii (strain Q212)).